The chain runs to 473 residues: Ornithine decarboxylase (473 aa).

At K106 the chain carries N6-(pyridoxal phosphate)lysine. Pyridoxal 5'-phosphate contacts are provided by residues S240, G277, and 313-316; that span reads EPGR. 367-368 is a binding site for substrate; it reads FD. C417 (proton donor; shared with dimeric partner) is an active-site residue. D418 contacts substrate. Y447 provides a ligand contact to pyridoxal 5'-phosphate.

It belongs to the Orn/Lys/Arg decarboxylase class-II family. As to quaternary structure, homodimer. Only the dimer is catalytically active, as the active sites are constructed of residues from both monomers. Pyridoxal 5'-phosphate is required as a cofactor.

It is found in the cytoplasm. It catalyses the reaction L-ornithine + H(+) = putrescine + CO2. It functions in the pathway amine and polyamine biosynthesis; putrescine biosynthesis via L-ornithine pathway; putrescine from L-ornithine: step 1/1. With respect to regulation, inhibited by antizyme (AZ) OAZ1 in response to polyamine levels. AZ inhibits the assembly of the functional homodimer by binding to ODC monomers and targeting them for ubiquitin-independent proteolytic destruction by the 26S proteasome. Functionally, catalyzes the first and rate-limiting step of polyamine biosynthesis that converts ornithine into putrescine, which is the precursor for the polyamines, spermidine and spermine. Polyamines are essential for cell proliferation and are implicated in cellular processes, ranging from DNA replication to apoptosis. The polypeptide is Ornithine decarboxylase (SPE1) (Candida albicans (strain SC5314 / ATCC MYA-2876) (Yeast)).